We begin with the raw amino-acid sequence, 1021 residues long: Sodium/potassium-transporting ATPase subunit alpha-1 (1021 aa).

Residues 1-5 (MGKGV) constitute a propeptide that is removed on maturation. Residues 1-11 (MGKGVGRDKYE) show a composition bias toward basic and acidic residues. The interval 1-36 (MGKGVGRDKYEPAAVSEHGDKKKAKKERDMDELKKE) is disordered. At 6 to 85 (GRDKYEPAAV…NALTPPPTTP (80 aa)) the chain is on the cytoplasmic side. An N6-acetyllysine modification is found at Lys9. Tyr10 is modified (phosphotyrosine). Position 16 is a phosphoserine; by PKC (Ser16). N6-acetyllysine is present on Lys21. Positions 26–36 (KERDMDELKKE) are enriched in basic and acidic residues. 2 positions are modified to phosphoserine: Ser38 and Ser45. The segment at 80-82 (PPP) is phosphoinositide-3 kinase binding. Residues 86–106 (EWVKFCRQLFGGFSMLLWIGA) form a helical membrane-spanning segment. Residues 107-129 (VLCFLAYGIQAATEEEPQNDNLY) are Extracellular-facing. Residues 130 to 150 (LGVVLSAVVIITGCFSYYQEA) form a helical membrane-spanning segment. Residues 151–286 (KSSKIMESFK…GGQTPIAAEI (136 aa)) lie on the Cytoplasmic side of the membrane. Ser226 carries the post-translational modification Phosphoserine. Tyr258 is modified (phosphotyrosine). The chain crosses the membrane as a helical span at residues 287-306 (EHFIHIITGVAVFLGVSFFI). The Extracellular segment spans residues 307–318 (LSLILEYTWLEA). Residues 319 to 336 (VIFLIGIIVANVPEGLLA) form a helical membrane-spanning segment. Topologically, residues 337-770 (TVTVCLTLTA…EEGRLIFDNL (434 aa)) are cytoplasmic. Asp374 (4-aspartylphosphate intermediate) is an active-site residue. Residues Ser450 and Ser482 each carry the phosphoserine modification. Lys485 contributes to the ATP binding site. Tyr540 bears the Phosphotyrosine mark. Residues 594 to 715 (RAAVPDAVGK…QGAIVAVTGD (122 aa)) form a mediates interaction with SCN7A region. Ser666 carries the post-translational modification Phosphoserine. Asp715 and Asp719 together coordinate Mg(2+). A helical membrane pass occupies residues 771 to 790 (KKSIAYTLTSNIPEITPFLI). The Extracellular segment spans residues 791–800 (FIIANIPLPL). A helical transmembrane segment spans residues 801–821 (GTVTILCIDLGTDMVPAISLA). The Cytoplasmic portion of the chain corresponds to 822–841 (YEQAESDIMKRQPRNPQTDK). A helical membrane pass occupies residues 842–864 (LVNERLISMAYGQIGMIQALGGF). Topologically, residues 865 to 916 (FTYFVIMAENGFLPNHLLGIRVTWDDRWINDVEDSYGQQWTYEQRKIVEFTC) are extracellular. The chain crosses the membrane as a helical span at residues 917–936 (HTAFFVSIVVVQWADLVICK). Residues 937–949 (TRRNSVFQQGMKN) are Cytoplasmic-facing. Ser941 is subject to Phosphoserine; by PKA. The chain crosses the membrane as a helical span at residues 950-968 (KILIFGLFEETALAAFLSY). Over 969-983 (CPGMGVALRMYPLKP) the chain is Extracellular. The chain crosses the membrane as a helical span at residues 984–1004 (TWWFCAFPYSLLIFVYDEVRK). Topologically, residues 1005-1021 (LIIRRRPGGWVEKETYY) are cytoplasmic.

Belongs to the cation transport ATPase (P-type) (TC 3.A.3) family. Type IIC subfamily. As to quaternary structure, the sodium/potassium-transporting ATPase is composed of a catalytic alpha subunit, an auxiliary non-catalytic beta subunit and an additional regulatory subunit. Interacts with regulatory subunit FXYD1. Interacts with regulatory subunit FXYD3. Interacts with SIK1. Interacts with SLC35G1 and STIM1. Interacts with CLN3; this interaction regulates the sodium/potassium-transporting ATPase complex localization at the plasma membrane. Interacts with SCN7A; activates ATP1A1 P-type sodium:potassium-exchanging transporter activity which indirectly signals to nearby neurons to regulate sodium homeostasis. Post-translationally, phosphorylation on Tyr-10 modulates pumping activity. Phosphorylation of Ser-941 by PKA modulates the response of ATP1A1 to PKC. Dephosphorylation by protein phosphatase 2A (PP2A) following increases in intracellular sodium, leading to increase catalytic activity.

Its subcellular location is the cell membrane. It is found in the basolateral cell membrane. The protein resides in the sarcolemma. The protein localises to the cell projection. It localises to the axon. Its subcellular location is the melanosome. It carries out the reaction K(+)(out) + Na(+)(in) + ATP + H2O = K(+)(in) + Na(+)(out) + ADP + phosphate + H(+). In terms of biological role, this is the catalytic component of the active enzyme, which catalyzes the hydrolysis of ATP coupled with the exchange of sodium and potassium ions across the plasma membrane. This action creates the electrochemical gradient of sodium and potassium ions, providing the energy for active transport of various nutrients. Could also be part of an osmosensory signaling pathway that senses body-fluid sodium levels and controls salt intake behavior as well as voluntary water intake to regulate sodium homeostasis. In Bos taurus (Bovine), this protein is Sodium/potassium-transporting ATPase subunit alpha-1 (ATP1A1).